The primary structure comprises 429 residues: Ribosomal RNA small subunit methyltransferase B (429 aa).

Residues 254–260 (CAAPGGK), Asp-277, Asp-303, and Asp-322 contribute to the S-adenosyl-L-methionine site. Cys-375 acts as the Nucleophile in catalysis.

The protein belongs to the class I-like SAM-binding methyltransferase superfamily. RsmB/NOP family.

It localises to the cytoplasm. The enzyme catalyses cytidine(967) in 16S rRNA + S-adenosyl-L-methionine = 5-methylcytidine(967) in 16S rRNA + S-adenosyl-L-homocysteine + H(+). Specifically methylates the cytosine at position 967 (m5C967) of 16S rRNA. The sequence is that of Ribosomal RNA small subunit methyltransferase B from Escherichia coli (strain SE11).